A 666-amino-acid polypeptide reads, in one-letter code: Transketolase (666 aa).

Substrate is bound at residue histidine 28. Thiamine diphosphate is bound by residues histidine 68 and 116-118 (GPL). Aspartate 157 is a binding site for Mg(2+). Thiamine diphosphate is bound by residues glycine 158 and asparagine 187. 2 residues coordinate Mg(2+): asparagine 187 and isoleucine 189. The substrate site is built by histidine 262, arginine 356, and serine 383. Histidine 262 lines the thiamine diphosphate pocket. Glutamate 410 serves as the catalytic Proton donor. Phenylalanine 436 is a binding site for thiamine diphosphate. Positions 460, 468, and 519 each coordinate substrate.

Belongs to the transketolase family. As to quaternary structure, homodimer. Mg(2+) serves as cofactor. Ca(2+) is required as a cofactor. Requires Mn(2+) as cofactor. It depends on Co(2+) as a cofactor. The cofactor is thiamine diphosphate.

The catalysed reaction is D-sedoheptulose 7-phosphate + D-glyceraldehyde 3-phosphate = aldehydo-D-ribose 5-phosphate + D-xylulose 5-phosphate. Its function is as follows. Catalyzes the transfer of a two-carbon ketol group from a ketose donor to an aldose acceptor, via a covalent intermediate with the cofactor thiamine pyrophosphate. In Halalkalibacterium halodurans (strain ATCC BAA-125 / DSM 18197 / FERM 7344 / JCM 9153 / C-125) (Bacillus halodurans), this protein is Transketolase (tkt).